We begin with the raw amino-acid sequence, 491 residues long: MGCRALLLLSFLLLGAATTIPPRLKTLGSPHLSASPTPDPAVARKYSVLYFEQKVDHFGFADMRTFKQRYLVADKHWQRNGGSILFYTGNEGDIVWFCNNTGFMWDVAEELKAMLVFAEHRYYGESLPFGQDSFKDSQHLNFLTSEQALADFAELIRHLEKTIPGAQGQPVIAIGGSYGGMLAAWFRMKYPHIVVGALAASAPIWQLDGMVPCGEFMKIVTNDFRKSGPYCSESIRKSWNVIDKLSGSGSGLQSLTNILHLCSPLTSEKIPTLKGWIAETWVNLAMVNYPYACNFLQPLPAWPIKEVCQYLKNPNVSDTVLLQNIFQALSVYYNYSGQAACLNISQTTTSSLGSMGWSFQACTEMVMPFCTNGIDDMFEPFLWDLEKYSNDCFNQWGVKPRPHWMTTMYGGKNISSHSNIIFSNGELDPWSGGGVTRDITDTLVAINIHDGAHHLDLRAHNAFDPSSVLLSRLLEVKHMKKWILDFYSNIQ.

The N-terminal stretch at 1–17 (MGCRALLLLSFLLLGAA) is a signal peptide. Residues 18-43 (TTIPPRLKTLGSPHLSASPTPDPAVA) constitute a propeptide that is removed on maturation. A glycan (N-linked (GlcNAc...) asparagine) is linked at Asn-99. Ser-177 (charge relay system) is an active-site residue. Positions 192 to 332 (HIVVGALAAS…QNIFQALSVY (141 aa)) are SKS domain. Cystine bridges form between Cys-213–Cys-370, Cys-231–Cys-308, Cys-262–Cys-341, and Cys-362–Cys-392. N-linked (GlcNAc...) asparagine glycans are attached at residues Asn-315, Asn-334, and Asn-343. Asn-413 carries an N-linked (GlcNAc...) asparagine glycan. Catalysis depends on charge relay system residues Asp-428 and His-453.

Belongs to the peptidase S28 family. Homodimer.

Its subcellular location is the lysosome. The enzyme catalyses Cleavage of a -Pro-|-Xaa bond to release a C-terminal amino acid.. In terms of biological role, cleaves C-terminal amino acids linked to proline in peptides such as angiotensin II, III and des-Arg9-bradykinin. This cleavage occurs at acidic pH, but enzymatic activity is retained with some substrates at neutral pH. The polypeptide is Lysosomal Pro-X carboxypeptidase (Prcp) (Mus musculus (Mouse)).